Consider the following 1198-residue polypeptide: MEDNSVLNEDSNLEHVEGQPRRSMSQPVLNVEGDKRTSSTSATQQQVLSGAFSSADVRSIPIIQTWEENKALKTKITILRGELQMYQRRYSEAKEASQKRVKEVMDDYVDLKLGQENVQEKMEQYKLMEEDLLAMQSRIETSEDNFARQMKEFEAQKHAMEERIKELELSATDANNTTVGSFRGTLDDILKKNDPDFTLTSGYEERKINDLEAKLLSEIDKVAELEDHIQQLRQELDDQSARLADSENVRAQLEAATGQGILGAAGNAMVPNSTFMIGNGRESQTRDQLNYIDDLETKLADAKKENDKARQALVEYMNKCSKLEHEIRTMVKNSTFDSSSMLLGGQTSDELKIQIGKVNGELNVLRAENRELRIRCDQLTGGDGNLSISLGQSRLMAGIATNDVDSIGQGNETGGTSMRILPRESQLDDLEESKLPLMDTSSAVRNQQQFASMWEDFESVKDSLQNNHNDTLEGSFNSSMPPPGRDATQSFLSQKSFKNSPIVMQKPKSLHLHLKSHQSEGAGEQIQNNSFSTKTASPHVSQSHIPILHDMQQILDSSAMFLEGQHDVAVNVEQMQEKMSQIREALARLFERLKSSAALFEEILERMGSSDPNADKIKKMKLAFETSINDKLNVSAILEAAEKDLHNMSLNFSILEKSIVSQAAEASRRFTIAPDAEDVASSSLLNASYSPLFKFTSNSDIVEKLQNEVSELKNELEMARTRDMRSPLNGSSGRLSDVQINTNRMFEDLEVSEATLQKAKEENSTLKSQFAELEANLHQVNSKLGEVRCELNEALARVDGEQETRVKAENALEEARQLISSLKHEENELKKTITDMGMRLNEAKKSDEFLKSELSTALEEEKKSQNLADELSEELNGWRMRTKEAENKVEHASSEKSEMLERIVHLETEMEKLSTSEIAADYCSTKMTERKKEIELAKYREDFENAAIVGLERISKEISELTKKTLKAKIIPSNISSIQLVCDELCRRLSREREQQHEYAKVMRDVNEKIEKLQLEKDALEHELKMMSSNNENVPPVGTSVSGMPTKTSNQKCAQPHYTSPTRQLLHESTMAVDAIVQKLKKTHNMSGMGPELKETIGNVINESRVLRDFLHQKLILFKGIDMSNWKNETVDQLITDLGQLHQDNLMLEEQIKKYKKELKLTKSAIPTLGVEFQDRIKTEIGKIATDMGGAVKEIRKK.

Positions 1–10 are enriched in polar residues; sequence MEDNSVLNED. The interval 1 to 45 is disordered; the sequence is MEDNSVLNEDSNLEHVEGQPRRSMSQPVLNVEGDKRTSSTSATQQ. 5 coiled-coil regions span residues 67–381, 566–603, 694–916, 983–1035, and 1127–1175; these read EENK…QLTG, HDVA…FEEI, KFTS…LSTS, DELC…ENVP, and KNET…EFQD.

It localises to the cytoplasm. Its subcellular location is the cytoskeleton. It is found in the microtubule organizing center. The protein resides in the centrosome. Its function is as follows. Plays a central role in centrosome maturation and mitotic spindle assembly during the first division of the zygote. Required for the centrosomal localization of air-1 and zyg-9. Probably not required in late embryogenesis and during larval development. The chain is Spindle-defective protein 5 (spd-5) from Caenorhabditis elegans.